A 153-amino-acid polypeptide reads, in one-letter code: Vasotocin-neurophysin VT 1 (153 aa).

A signal peptide spans 1 to 19 (MPQCALLLSLLGLLALSSA). A disulfide bridge connects residues Cys20 and Cys25. At Gly28 the chain carries Glycine amide. Cystine bridges form between Cys41–Cys85, Cys44–Cys58, Cys52–Cys75, Cys59–Cys65, Cys92–Cys105, Cys99–Cys117, and Cys106–Cys111.

The protein belongs to the vasopressin/oxytocin family. Seven disulfide bonds are present in neurophysin.

Its subcellular location is the secreted. Vasotocin is probably an antidiuretic hormone. In Takifugu rubripes (Japanese pufferfish), this protein is Vasotocin-neurophysin VT 1.